Reading from the N-terminus, the 661-residue chain is WD repeat-containing protein 26 (661 aa).

A compositionally biased stretch (gly residues) spans 1-27; the sequence is MQANGAGGGGGGGGGGGGGGGGGGGQG. Disordered stretches follow at residues 1 to 70 and 99 to 118; these read MQAN…ASNN and TAASSSLATPELGSSLKKKK. Low complexity-rich tracts occupy residues 56–70 and 99–113; these read ANGLLPSAPSAASNN and TAASSSLATPELGSS. Residues S121 and S123 each carry the phosphoserine modification. A LisH domain is found at 123-155; that stretch reads SDEDVIRLIGQHLNGLGLNQTVDLLMQESGCRL. The 76-residue stretch at 156–231 folds into the CTLH domain; sequence EHPSATKFRN…EYLEDGKVLE (76 aa). 6 WD repeats span residues 353 to 392, 399 to 438, 444 to 484, 524 to 563, 566 to 608, and 611 to 651; these read EHCNEVWFCKFSNDGTKLATGSKDTTVIIWQVDPDTHLLK, GHAYGVSYIAWSPDDNYLVACGPDDCSELWLWNVQTGELR, SHED…DSWE, QEDHPIMSFTISKNGRLALLNVATQGVHLWDLQDRVLVRK, GVTQ…PIAE, and GHTR…DHQN.

In terms of assembly, forms homooligomers. Identified in the CTLH complex that contains GID4, RANBP9 and/or RANBP10, MKLN1, MAEA, RMND5A (or alternatively its paralog RMND5B), GID8, ARMC8, WDR26 and YPEL5. Within this complex, MAEA, RMND5A (or alternatively its paralog RMND5B), GID8, WDR26, and RANBP9 and/or RANBP10 form the catalytic core, while GID4, MKLN1, ARMC8 and YPEL5 have ancillary roles. Interacts with DDB1-CUL4A/B E3 ligase complexes. Forms a complex composed of at least WDR26, a G-beta:gamma unit, and PLCB2. Interacts with AXIN1. As to expression, broadly expressed, with highest levels in heart and skeletal muscle.

The protein resides in the cytoplasm. The protein localises to the nucleus. Its subcellular location is the mitochondrion. Functionally, G-beta-like protein involved in cell signal transduction. Acts as a negative regulator in MAPK signaling pathway. Functions as a scaffolding protein to promote G beta:gamma-mediated PLCB2 plasma membrane translocation and subsequent activation in leukocytes. Core component of the CTLH E3 ubiquitin-protein ligase complex that selectively accepts ubiquitin from UBE2H and mediates ubiquitination and subsequent proteasomal degradation of the transcription factor HBP1. Acts as a negative regulator of the canonical Wnt signaling pathway through preventing ubiquitination of beta-catenin CTNNB1 by the beta-catenin destruction complex, thus negatively regulating CTNNB1 degradation. Serves as a scaffold to coordinate PI3K/AKT pathway-driven cell growth and migration. Protects cells from oxidative stress-induced apoptosis via the down-regulation of AP-1 transcriptional activity as well as by inhibiting cytochrome c release from mitochondria. Also protects cells by promoting hypoxia-mediated autophagy and mitophagy. In Homo sapiens (Human), this protein is WD repeat-containing protein 26 (WDR26).